The sequence spans 307 residues: Small ribosomal subunit biogenesis GTPase RsgA (307 aa).

In terms of domain architecture, CP-type G spans 85-242 (RQDAWKTKLI…LIDSPGLQEF (158 aa)). GTP contacts are provided by residues 135–138 (NKAD) and 184–192 (GQSGMGKST). Residues cysteine 266, cysteine 271, histidine 273, and cysteine 279 each coordinate Zn(2+).

This sequence belongs to the TRAFAC class YlqF/YawG GTPase family. RsgA subfamily. Monomer. Associates with 30S ribosomal subunit, binds 16S rRNA. Zn(2+) serves as cofactor.

It localises to the cytoplasm. In terms of biological role, one of several proteins that assist in the late maturation steps of the functional core of the 30S ribosomal subunit. Helps release RbfA from mature subunits. May play a role in the assembly of ribosomal proteins into the subunit. Circularly permuted GTPase that catalyzes slow GTP hydrolysis, GTPase activity is stimulated by the 30S ribosomal subunit. In Neisseria meningitidis serogroup C (strain 053442), this protein is Small ribosomal subunit biogenesis GTPase RsgA.